A 209-amino-acid polypeptide reads, in one-letter code: Pyridoxine/pyridoxamine 5'-phosphate oxidase (209 aa).

Substrate contacts are provided by residues 7–10 (REDY) and K64. Residues 59-64 (RIVLLK), 74-75 (FT), R80, and K81 each bind FMN. Residues Y121, R125, and S129 each coordinate substrate. Residues 138–139 (QS) and W182 each bind FMN. 188–190 (RLH) lines the substrate pocket. R192 is an FMN binding site.

The protein belongs to the pyridoxamine 5'-phosphate oxidase family. Homodimer. FMN is required as a cofactor.

The catalysed reaction is pyridoxamine 5'-phosphate + O2 + H2O = pyridoxal 5'-phosphate + H2O2 + NH4(+). The enzyme catalyses pyridoxine 5'-phosphate + O2 = pyridoxal 5'-phosphate + H2O2. The protein operates within cofactor metabolism; pyridoxal 5'-phosphate salvage; pyridoxal 5'-phosphate from pyridoxamine 5'-phosphate: step 1/1. It functions in the pathway cofactor metabolism; pyridoxal 5'-phosphate salvage; pyridoxal 5'-phosphate from pyridoxine 5'-phosphate: step 1/1. Its function is as follows. Catalyzes the oxidation of either pyridoxine 5'-phosphate (PNP) or pyridoxamine 5'-phosphate (PMP) into pyridoxal 5'-phosphate (PLP). This Actinobacillus pleuropneumoniae serotype 5b (strain L20) protein is Pyridoxine/pyridoxamine 5'-phosphate oxidase.